A 218-amino-acid chain; its full sequence is Ohanin-like protein (218 aa).

An N-terminal signal peptide occupies residues 1–40; the sequence is MSPSAGFQFSLYFLQTKKVLWKLTGLCYILLFTLCFFADQ. Residues 41–48 constitute a propeptide that is removed on maturation; the sequence is ENGGKALA. One can recognise a B30.2/SPRY domain in the interval 49–155; that stretch reads SPPGIWKRAD…RIWQTGLWWL (107 aa). The propeptide occupies 156–218; that stretch reads RHLETDPGRV…LGGTVSLTTL (63 aa).

This sequence belongs to the ohanin/vespryn family. Expressed by the venom gland.

The protein localises to the secreted. In terms of biological role, neurotoxin that produces dose-dependent hypolocomotion and hyperalgesia in mice. May directly act on the central nervous system, as it is 6500-fold more potent when administered intracerebroventricularly than intraperitoneal. The polypeptide is Ohanin-like protein (Lachesis muta muta (Bushmaster)).